Reading from the N-terminus, the 294-residue chain is Acetylglutamate kinase (294 aa).

Substrate contacts are provided by residues 63–64 (GG), Arg85, and Asn188.

The protein belongs to the acetylglutamate kinase family. ArgB subfamily.

The protein localises to the cytoplasm. The catalysed reaction is N-acetyl-L-glutamate + ATP = N-acetyl-L-glutamyl 5-phosphate + ADP. It participates in amino-acid biosynthesis; L-arginine biosynthesis; N(2)-acetyl-L-ornithine from L-glutamate: step 2/4. Catalyzes the ATP-dependent phosphorylation of N-acetyl-L-glutamate. The sequence is that of Acetylglutamate kinase from Methanococcus maripaludis (strain C5 / ATCC BAA-1333).